Here is a 335-residue protein sequence, read N- to C-terminus: tRNA N6-adenosine threonylcarbamoyltransferase (335 aa).

Residues H109, H113, and Y130 each contribute to the a divalent metal cation site. Residues 130–134 (YVSGG), D162, G177, E181, and N266 each bind substrate. D294 lines the a divalent metal cation pocket.

The protein belongs to the KAE1 / TsaD family. As to quaternary structure, component of the EKC/KEOPS complex composed of at least GON7, TP53RK, TPRKB, OSGEP and LAGE3; the whole complex dimerizes. A divalent metal cation serves as cofactor. As to expression, widely expressed at low level. Expressed at intermediate level in lung. Weakly expressed in testis, skeletal muscle, kidney, liver, spleen, brain and heart.

The protein resides in the cytoplasm. The protein localises to the nucleus. The catalysed reaction is L-threonylcarbamoyladenylate + adenosine(37) in tRNA = N(6)-L-threonylcarbamoyladenosine(37) in tRNA + AMP + H(+). Its function is as follows. Component of the EKC/KEOPS complex that is required for the formation of a threonylcarbamoyl group on adenosine at position 37 (t(6)A37) in tRNAs that read codons beginning with adenine. The complex is probably involved in the transfer of the threonylcarbamoyl moiety of threonylcarbamoyl-AMP (TC-AMP) to the N6 group of A37. OSGEP likely plays a direct catalytic role in this reaction, but requires other protein(s) of the complex to fulfill this activity. The chain is tRNA N6-adenosine threonylcarbamoyltransferase (Osgep) from Mus musculus (Mouse).